A 772-amino-acid chain; its full sequence is Rho guanine nucleotide exchange factor 6 (772 aa).

Positions 1–111 (MNPEERVVTW…TLLAVNKATE (111 aa)) constitute a Calponin-homology (CH) domain. The segment at 115–158 (SERPCGRSSSLSATTSSQTNPQAAVPSTTPEQQSEEKAAEMTEN) is disordered. Low complexity predominate over residues 122–133 (SSSLSATTSSQT). A Phosphoserine modification is found at S126. T133 carries the phosphothreonine modification. Over residues 134–146 (NPQAAVPSTTPEQ) the composition is skewed to polar residues. Residues 160 to 219 (SHQLIVKARFNFKQTNEDELSVCKGDIIYVTRVEEGGWWEGTLNGRTGWFPSNYVREIKP) form the SH3 domain. At S225 the chain carries Phosphoserine. Positions 241-421 (YYTVVLQNIL…KSLMGQCQDL (181 aa)) constitute a DH domain. The region spanning 443–548 (DIKTLGNVIF…WMEQLNRLTK (106 aa)) is the PH domain. A Phosphoserine modification is found at S488. Residues 557–573 (SKTSSSSCSTHSSFSST) are compositionally biased toward low complexity. Residues 557 to 581 (SKTSSSSCSTHSSFSSTGQPRGPLE) are disordered. Residues S640 and S680 each carry the phosphoserine modification.

As to quaternary structure, interacts with PAK kinases through the SH3 domain. Interacts with GIT1. Interacts with PARVB. Component of cytoplasmic complexes, which also contain PXN, GIT1 and PAK1. Interacts with BIN2. Identified in a complex with BIN2 and GIT2. Interacts with PARVG; the guanine nucleotide exchange factor activity of ARHGEF6 is essential for PARVG-induced enhancement of cell spreading.

It is found in the cell projection. The protein resides in the lamellipodium. Its function is as follows. Acts as a RAC1 guanine nucleotide exchange factor (GEF). The protein is Rho guanine nucleotide exchange factor 6 (Arhgef6) of Rattus norvegicus (Rat).